The chain runs to 240 residues: 1-(5-phosphoribosyl)-5-[(5-phosphoribosylamino)methylideneamino] imidazole-4-carboxamide isomerase (240 aa).

The active-site Proton acceptor is the Asp-9. Asp-131 serves as the catalytic Proton donor.

It belongs to the HisA/HisF family.

The protein localises to the cytoplasm. The enzyme catalyses 1-(5-phospho-beta-D-ribosyl)-5-[(5-phospho-beta-D-ribosylamino)methylideneamino]imidazole-4-carboxamide = 5-[(5-phospho-1-deoxy-D-ribulos-1-ylimino)methylamino]-1-(5-phospho-beta-D-ribosyl)imidazole-4-carboxamide. It participates in amino-acid biosynthesis; L-histidine biosynthesis; L-histidine from 5-phospho-alpha-D-ribose 1-diphosphate: step 4/9. This is 1-(5-phosphoribosyl)-5-[(5-phosphoribosylamino)methylideneamino] imidazole-4-carboxamide isomerase from Cytophaga hutchinsonii (strain ATCC 33406 / DSM 1761 / CIP 103989 / NBRC 15051 / NCIMB 9469 / D465).